The following is a 98-amino-acid chain: Complement inhibitor RaCI2 (98 aa).

An N-terminal signal peptide occupies residues 1 to 21 (MNAVTVLAFTAFALIVHDCYS). 3 cysteine pairs are disulfide-bonded: Cys-35-Cys-59, Cys-40-Cys-61, and Cys-55-Cys-76.

It belongs to the RaCI family. In terms of tissue distribution, expressed in salivary glands.

It is found in the secreted. Functionally, complement inhibitor. Prevents complement-mediated C5 activation by binding to C5. Binds C5 at a different binding site than the other tick complement inhibitors OmCI and CirpT1, and the drug eculizumab. This is Complement inhibitor RaCI2 from Rhipicephalus microplus (Cattle tick).